A 458-amino-acid polypeptide reads, in one-letter code: Plant UBX domain-containing protein 2 (458 aa).

A disordered region spans residues 1–103 (MDDVKDKLKG…APQDGFDPYG (103 aa)). A compositionally biased stretch (polar residues) spans 44 to 54 (PIQNRFNSSQA). Over residues 56 to 70 (NPTPRPKPNPNPLPE) the composition is skewed to pro residues. Residues 74–85 (SSSDQKISGSTR) are compositionally biased toward polar residues. The C2H2-type; atypical zinc finger occupies 121 to 143 (FECPICKNPFTSEEEVSVHVESC). A PUB domain is found at 181–248 (SSIDVLLRLF…EIWAVMDVPS (68 aa)). A UBX domain is found at 349 to 433 (KRYKRSMIRV…ELVPSALIRF (85 aa)).

In terms of assembly, interacts with CDC48A in vitro and co-fractionates with membrane-associated but not soluble CDC48A in vivo.

The protein localises to the membrane. Functionally, facilitates the interaction of SYP31 and CDC48A, thereby regulating an CDC48A membrane-associated function. Appears to act as a negative regulator mediating the powdery mildew-plant interaction. The protein is Plant UBX domain-containing protein 2 of Arabidopsis thaliana (Mouse-ear cress).